A 382-amino-acid chain; its full sequence is Neuropeptide Y receptor type 2 (382 aa).

Positions 1-39 are disordered; it reads MGPIGAEADENQTVEEMKMEPSGPGHTTPRGELAPDSEP. Over 1-46 the chain is Extracellular; sequence MGPIGAEADENQTVEEMKMEPSGPGHTTPRGELAPDSEPELKDSTK. N-linked (GlcNAc...) asparagine glycosylation is present at Asn11. The chain crosses the membrane as a helical span at residues 47–67; it reads LIEVQIILILAYCSIILLGVV. The Cytoplasmic portion of the chain corresponds to 68–87; sequence GNSLVIHVVIKFKSMRTVTN. Residues 88–108 form a helical membrane-spanning segment; sequence FFIANLAVADLLVNTLCLPFT. Residues 109–125 lie on the Extracellular side of the membrane; it reads LTYTLMGEWKMGPVLCH. An intrachain disulfide couples Cys124 to Cys204. Residues 126–146 form a helical membrane-spanning segment; the sequence is LVPYAQGLAVQVSTITLTVIA. Topologically, residues 147–166 are cytoplasmic; the sequence is LDRHRCIVYHLESKISKRIS. Residues 167–187 traverse the membrane as a helical segment; that stretch reads FLIIGLAWGISALLASPLAIF. Topologically, residues 188-217 are extracellular; sequence REYSLIEIIPDFEIVACTEKWPGEEKSIYG. A helical membrane pass occupies residues 218 to 238; sequence TVYSLSSLLILYVLPLGIISF. Topologically, residues 239 to 269 are cytoplasmic; it reads SYARIWSKLKNHVSPGGVNDHYHQRRQKTTK. Residues 270–290 traverse the membrane as a helical segment; sequence MLVCVVVVFAVSWLPLHAFQL. At 291–305 the chain is on the extracellular side; it reads AVDIDSQVLDLKEYK. A helical membrane pass occupies residues 306 to 326; it reads LIFTVFHIIAMCSTFANPLLY. Residues 327–382 lie on the Cytoplasmic side of the membrane; the sequence is GWMNSNYRKAFLSAFRCEQRLDAIHSEVSMTSKAKKNLEATKNGGPDDSFTEATNV. Cys343 carries S-palmitoyl cysteine lipidation. Residues 363–382 form a disordered region; it reads NLEATKNGGPDDSFTEATNV.

It belongs to the G-protein coupled receptor 1 family.

Its subcellular location is the cell membrane. Receptor for neuropeptide Y and peptide YY. This Sus scrofa (Pig) protein is Neuropeptide Y receptor type 2 (NPY2R).